The following is a 543-amino-acid chain: Glutamyl-tRNA(Gln) amidotransferase subunit A, chloroplastic/mitochondrial (543 aa).

Active-site charge relay system residues include K121 and S196. The active-site Acyl-ester intermediate is the S220.

It belongs to the amidase family. GatA subfamily. Subunit of the heterotrimeric GatCAB amidotransferase (AdT) complex, composed of A, B and C subunits.

The protein localises to the mitochondrion. It is found in the plastid. Its subcellular location is the chloroplast stroma. The catalysed reaction is L-glutamyl-tRNA(Gln) + L-glutamine + ATP + H2O = L-glutaminyl-tRNA(Gln) + L-glutamate + ADP + phosphate + H(+). Functionally, allows the formation of correctly charged Gln-tRNA(Gln) through the transamidation of misacylated Glu-tRNA(Gln) in chloroplasts and mitochondria. The reaction takes place in the presence of glutamine and ATP through an activated gamma-phospho-Glu-tRNA(Gln). This is Glutamyl-tRNA(Gln) amidotransferase subunit A, chloroplastic/mitochondrial from Zea mays (Maize).